Reading from the N-terminus, the 149-residue chain is 18 kDa antigen 1 (149 aa).

Positions 21–131 constitute a sHSP domain; that stretch reads TAARPAVMPM…KPRKIAVGRG (111 aa).

It belongs to the small heat shock protein (HSP20) family.

Its function is as follows. Not known. This protein is one of the major immune reactive proteins in mycobacteria. The sequence is that of 18 kDa antigen 1 from Mycobacterium intracellulare.